The primary structure comprises 238 residues: 2-C-methyl-D-erythritol 4-phosphate cytidylyltransferase (238 aa).

It belongs to the IspD/TarI cytidylyltransferase family. IspD subfamily.

It carries out the reaction 2-C-methyl-D-erythritol 4-phosphate + CTP + H(+) = 4-CDP-2-C-methyl-D-erythritol + diphosphate. It functions in the pathway isoprenoid biosynthesis; isopentenyl diphosphate biosynthesis via DXP pathway; isopentenyl diphosphate from 1-deoxy-D-xylulose 5-phosphate: step 2/6. Catalyzes the formation of 4-diphosphocytidyl-2-C-methyl-D-erythritol from CTP and 2-C-methyl-D-erythritol 4-phosphate (MEP). The chain is 2-C-methyl-D-erythritol 4-phosphate cytidylyltransferase from Acinetobacter baumannii (strain SDF).